The primary structure comprises 233 residues: Auxin-responsive protein IAA11 (233 aa).

Disordered regions lie at residues 1–27 (MAGL…RSSG) and 46–100 (PAAV…PKAQ). Positions 11-15 (LRLGL) match the EAR-like (transcriptional repression) motif. Residues 54 to 63 (GAQEDKEDAD) show a composition bias toward acidic residues. One can recognise a PB1 domain in the interval 122–217 (AALVKVSMDG…SCKRLRIMKG (96 aa)).

The protein belongs to the Aux/IAA family. In terms of assembly, homodimers and heterodimers. Highly expressed in etiolated shoots. Expressed in roots.

Its subcellular location is the nucleus. Aux/IAA proteins are short-lived transcriptional factors that function as repressors of early auxin response genes at low auxin concentrations. The chain is Auxin-responsive protein IAA11 (IAA11) from Oryza sativa subsp. japonica (Rice).